We begin with the raw amino-acid sequence, 448 residues long: Tubulin beta chain (448 aa).

8 residues coordinate GTP: glutamine 11, glutamate 69, serine 138, glycine 142, threonine 143, glycine 144, asparagine 204, and asparagine 226. Glutamate 69 is a Mg(2+) binding site. The segment at 429–448 (SISDGEEQPYAEEAAYEAEE) is disordered. Residues 432–448 (DGEEQPYAEEAAYEAEE) show a composition bias toward acidic residues.

The protein belongs to the tubulin family. As to quaternary structure, dimer of alpha and beta chains. A typical microtubule is a hollow water-filled tube with an outer diameter of 25 nm and an inner diameter of 15 nM. Alpha-beta heterodimers associate head-to-tail to form protofilaments running lengthwise along the microtubule wall with the beta-tubulin subunit facing the microtubule plus end conferring a structural polarity. Microtubules usually have 13 protofilaments but different protofilament numbers can be found in some organisms and specialized cells. It depends on Mg(2+) as a cofactor.

It localises to the cytoplasm. The protein resides in the cytoskeleton. Its function is as follows. Tubulin is the major constituent of microtubules, a cylinder consisting of laterally associated linear protofilaments composed of alpha- and beta-tubulin heterodimers. Microtubules grow by the addition of GTP-tubulin dimers to the microtubule end, where a stabilizing cap forms. Below the cap, tubulin dimers are in GDP-bound state, owing to GTPase activity of alpha-tubulin. The protein is Tubulin beta chain of Aspergillus fumigatus (strain ATCC MYA-4609 / CBS 101355 / FGSC A1100 / Af293) (Neosartorya fumigata).